Consider the following 78-residue polypeptide: Dihydrofolate reductase type 2 (78 aa).

Residues 32-36 (KKSGA) and 66-69 (VQIY) contribute to the NADP(+) site. A substrate-binding site is contributed by Ile68.

Homotetramer.

The enzyme catalyses (6S)-5,6,7,8-tetrahydrofolate + NADP(+) = 7,8-dihydrofolate + NADPH + H(+). It functions in the pathway cofactor biosynthesis; tetrahydrofolate biosynthesis; 5,6,7,8-tetrahydrofolate from 7,8-dihydrofolate: step 1/1. Key enzyme in folate metabolism. Catalyzes an essential reaction for de novo glycine and purine synthesis, and for DNA precursor synthesis. In Escherichia coli, this protein is Dihydrofolate reductase type 2.